A 387-amino-acid chain; its full sequence is Chorismate synthase (387 aa).

Arg-42 and Arg-48 together coordinate NADP(+). FMN-binding positions include 131-133, 251-252, Gly-295, 310-314, and Arg-336; these read RSS, QA, and KPIPT.

The protein belongs to the chorismate synthase family. As to quaternary structure, homotetramer. FMNH2 is required as a cofactor.

The catalysed reaction is 5-O-(1-carboxyvinyl)-3-phosphoshikimate = chorismate + phosphate. It participates in metabolic intermediate biosynthesis; chorismate biosynthesis; chorismate from D-erythrose 4-phosphate and phosphoenolpyruvate: step 7/7. Catalyzes the anti-1,4-elimination of the C-3 phosphate and the C-6 proR hydrogen from 5-enolpyruvylshikimate-3-phosphate (EPSP) to yield chorismate, which is the branch point compound that serves as the starting substrate for the three terminal pathways of aromatic amino acid biosynthesis. This reaction introduces a second double bond into the aromatic ring system. This Syntrophotalea carbinolica (strain DSM 2380 / NBRC 103641 / GraBd1) (Pelobacter carbinolicus) protein is Chorismate synthase.